The chain runs to 293 residues: uncharacterized protein (293 aa).

This is an uncharacterized protein from Treponema pallidum (strain Nichols).